The following is a 343-amino-acid chain: ATP phosphoribosyltransferase regulatory subunit (343 aa).

A disordered region spans residues 324–343 (RANGRAKRPARPRRSPPRPR). The span at 327 to 343 (GRAKRPARPRRSPPRPR) shows a compositional bias: basic residues.

The protein belongs to the class-II aminoacyl-tRNA synthetase family. HisZ subfamily. Heteromultimer composed of HisG and HisZ subunits.

Its subcellular location is the cytoplasm. It functions in the pathway amino-acid biosynthesis; L-histidine biosynthesis; L-histidine from 5-phospho-alpha-D-ribose 1-diphosphate: step 1/9. Its function is as follows. Required for the first step of histidine biosynthesis. May allow the feedback regulation of ATP phosphoribosyltransferase activity by histidine. This Anaeromyxobacter sp. (strain Fw109-5) protein is ATP phosphoribosyltransferase regulatory subunit.